Consider the following 108-residue polypeptide: Zinc finger protein 475 (108 aa).

C2HC/C3H-type zinc fingers lie at residues 6-35 (PAVV…KWHN) and 79-108 (QLVP…KAAK). The Zn(2+) site is built by C10, C13, H25, C29, C83, C86, H98, and C102.

Requires Zn(2+) as cofactor.

The chain is Zinc finger protein 475 from Homo sapiens (Human).